A 194-amino-acid polypeptide reads, in one-letter code: Thymidine kinase (194 aa).

Residues 15-22 (GSMFSGKS) and 88-91 (DEVQ) each bind ATP. Glutamate 89 (proton acceptor) is an active-site residue. 4 residues coordinate Zn(2+): cysteine 145, cysteine 148, cysteine 183, and cysteine 186.

Belongs to the thymidine kinase family. Homotetramer.

It is found in the cytoplasm. The catalysed reaction is thymidine + ATP = dTMP + ADP + H(+). The chain is Thymidine kinase from Bacillus cereus (strain AH820).